The sequence spans 552 residues: CTP synthase (552 aa).

The segment at 1 to 273 (MSESKKNPET…LTPIARRFNM (273 aa)) is amidoligase domain. Ser21 is a CTP binding site. Ser21 contacts UTP. ATP contacts are provided by residues 22–27 (SLGKGI) and Asp79. Asp79 and Glu147 together coordinate Mg(2+). Residues 154–156 (DIE), 194–199 (KTKPTQ), and Lys230 contribute to the CTP site. UTP-binding positions include 194-199 (KTKPTQ) and Lys230. Positions 298 to 548 (TIAFVGKYLS…IQKSLELKKV (251 aa)) constitute a Glutamine amidotransferase type-1 domain. Gly359 contacts L-glutamine. Cys386 serves as the catalytic Nucleophile; for glutamine hydrolysis. L-glutamine-binding positions include 387–390 (LGMQ), Glu410, and Arg478. Residues His521 and Glu523 contribute to the active site.

It belongs to the CTP synthase family. Homotetramer.

It catalyses the reaction UTP + L-glutamine + ATP + H2O = CTP + L-glutamate + ADP + phosphate + 2 H(+). The enzyme catalyses L-glutamine + H2O = L-glutamate + NH4(+). The catalysed reaction is UTP + NH4(+) + ATP = CTP + ADP + phosphate + 2 H(+). Its pathway is pyrimidine metabolism; CTP biosynthesis via de novo pathway; CTP from UDP: step 2/2. With respect to regulation, allosterically activated by GTP, when glutamine is the substrate; GTP has no effect on the reaction when ammonia is the substrate. The allosteric effector GTP functions by stabilizing the protein conformation that binds the tetrahedral intermediate(s) formed during glutamine hydrolysis. Inhibited by the product CTP, via allosteric rather than competitive inhibition. Functionally, catalyzes the ATP-dependent amination of UTP to CTP with either L-glutamine or ammonia as the source of nitrogen. Regulates intracellular CTP levels through interactions with the four ribonucleotide triphosphates. The polypeptide is CTP synthase (Wolinella succinogenes (strain ATCC 29543 / DSM 1740 / CCUG 13145 / JCM 31913 / LMG 7466 / NCTC 11488 / FDC 602W) (Vibrio succinogenes)).